A 1038-amino-acid polypeptide reads, in one-letter code: Bone morphogenetic protein receptor type-2 (1038 aa).

Residues 1–26 form the signal peptide; that stretch reads MTSSLHRPFRVPWLLWAVLLVSTTAA. At 27-150 the chain is on the extracellular side; it reads SQNQERLCAF…PPHSFNRDET (124 aa). 5 cysteine pairs are disulfide-bonded: cysteine 34/cysteine 66, cysteine 60/cysteine 84, cysteine 94/cysteine 117, cysteine 99/cysteine 116, and cysteine 118/cysteine 123. Asparagine 55 carries N-linked (GlcNAc...) asparagine glycosylation. The N-linked (GlcNAc...) asparagine glycan is linked to asparagine 110. A glycan (N-linked (GlcNAc...) asparagine) is linked at asparagine 126. A helical transmembrane segment spans residues 151 to 171; that stretch reads IIIALASVSVLAVLIVALCFG. Topologically, residues 172–1038 are cytoplasmic; that stretch reads YRMLTGDRKQ…VSKDIGMNCL (867 aa). One can recognise a Protein kinase domain in the interval 203-504; it reads LKLLELIGRG…QCAEERMAEL (302 aa). ATP contacts are provided by residues 209–217, lysine 230, and 280–282; these read IGRGRYGAV and EYY. Aspartate 333 serves as the catalytic Proton acceptor. ATP-binding positions include 337-338 and aspartate 351; that span reads RN. A Phosphothreonine modification is found at threonine 379. At serine 586 the chain carries Phosphoserine. Residues 593–626 form a disordered region; the sequence is QAQARIPSPETSVTSLSTNTTTTNTTGLTPSTGM. The segment covering 603 to 626 has biased composition (low complexity); it reads TSVTSLSTNTTTTNTTGLTPSTGM. Phosphoserine occurs at positions 680 and 681. The disordered stretch occupies residues 746 to 769; that stretch reads PKQQNLPKRPTSLPLNTKNSTKEP. A Phosphoserine modification is found at serine 843. Basic and acidic residues predominate over residues 872–896; the sequence is RREQQAGHDEGVLDRLVDRRERPLE. The segment at 872 to 974 is disordered; the sequence is RREQQAGHDE…SGSGEKIKRR (103 aa). Polar residues-rich tracts occupy residues 909 to 924 and 937 to 964; these read PCSE…TSTA and RPNS…QDGK.

Belongs to the protein kinase superfamily. TKL Ser/Thr protein kinase family. TGFB receptor subfamily. In terms of assembly, interacts with GDF5. Interacts with BMP4. Interacts with SCUBE3. Interacts with TSC22D1/TSC-22. Interacts with activin A/INHBA. The cofactor is Mg(2+). It depends on Mn(2+) as a cofactor.

The protein resides in the cell membrane. It carries out the reaction L-threonyl-[receptor-protein] + ATP = O-phospho-L-threonyl-[receptor-protein] + ADP + H(+). The catalysed reaction is L-seryl-[receptor-protein] + ATP = O-phospho-L-seryl-[receptor-protein] + ADP + H(+). In terms of biological role, on ligand binding, forms a receptor complex consisting of two type II and two type I transmembrane serine/threonine kinases. Type II receptors phosphorylate and activate type I receptors which autophosphorylate, then bind and activate SMAD transcriptional regulators. Can also mediate signaling through the activation of the p38MAPK cascade. Binds to BMP7, BMP2 and, less efficiently, BMP4. Binding is weak but enhanced by the presence of type I receptors for BMPs. Mediates induction of adipogenesis by GDF6. Promotes signaling also by binding to activin A/INHBA. The chain is Bone morphogenetic protein receptor type-2 (Bmpr2) from Mus musculus (Mouse).